Consider the following 103-residue polypeptide: Large ribosomal subunit protein uL24 (103 aa).

The protein belongs to the universal ribosomal protein uL24 family. Part of the 50S ribosomal subunit.

Functionally, one of two assembly initiator proteins, it binds directly to the 5'-end of the 23S rRNA, where it nucleates assembly of the 50S subunit. One of the proteins that surrounds the polypeptide exit tunnel on the outside of the subunit. This chain is Large ribosomal subunit protein uL24, found in Sinorhizobium medicae (strain WSM419) (Ensifer medicae).